The chain runs to 95 residues: UPF0298 protein LVIS_1401 (95 aa).

This sequence belongs to the UPF0298 family.

It localises to the cytoplasm. The sequence is that of UPF0298 protein LVIS_1401 from Levilactobacillus brevis (strain ATCC 367 / BCRC 12310 / CIP 105137 / JCM 1170 / LMG 11437 / NCIMB 947 / NCTC 947) (Lactobacillus brevis).